A 155-amino-acid polypeptide reads, in one-letter code: Small ribosomal subunit protein uS7c (155 aa).

The protein belongs to the universal ribosomal protein uS7 family. Part of the 30S ribosomal subunit.

The protein resides in the plastid. It localises to the chloroplast. One of the primary rRNA binding proteins, it binds directly to 16S rRNA where it nucleates assembly of the head domain of the 30S subunit. The polypeptide is Small ribosomal subunit protein uS7c (rps7) (Stewartia pseudocamellia (Japanese stewartia)).